A 285-amino-acid polypeptide reads, in one-letter code: Probable endonuclease 4 (285 aa).

Positions 69, 109, 145, 179, 182, 216, 229, 231, and 261 each coordinate Zn(2+).

The protein belongs to the AP endonuclease 2 family. The cofactor is Zn(2+).

It carries out the reaction Endonucleolytic cleavage to 5'-phosphooligonucleotide end-products.. Endonuclease IV plays a role in DNA repair. It cleaves phosphodiester bonds at apurinic or apyrimidinic (AP) sites, generating a 3'-hydroxyl group and a 5'-terminal sugar phosphate. This is Probable endonuclease 4 from Yersinia pestis bv. Antiqua (strain Antiqua).